A 206-amino-acid polypeptide reads, in one-letter code: Pyridoxine/pyridoxamine 5'-phosphate oxidase (206 aa).

FMN is bound by residues 53–58 (RMVLLK), 68–69 (YT), lysine 75, and glutamine 97. Position 58 (lysine 58) interacts with substrate. Residues tyrosine 115, arginine 119, and serine 123 each coordinate substrate. Residues 132 to 133 (QS) and tryptophan 177 contribute to the FMN site. 183–185 (RLH) is a binding site for substrate. Arginine 187 provides a ligand contact to FMN.

Belongs to the pyridoxamine 5'-phosphate oxidase family. As to quaternary structure, homodimer. FMN is required as a cofactor.

It carries out the reaction pyridoxamine 5'-phosphate + O2 + H2O = pyridoxal 5'-phosphate + H2O2 + NH4(+). It catalyses the reaction pyridoxine 5'-phosphate + O2 = pyridoxal 5'-phosphate + H2O2. It participates in cofactor metabolism; pyridoxal 5'-phosphate salvage; pyridoxal 5'-phosphate from pyridoxamine 5'-phosphate: step 1/1. The protein operates within cofactor metabolism; pyridoxal 5'-phosphate salvage; pyridoxal 5'-phosphate from pyridoxine 5'-phosphate: step 1/1. In terms of biological role, catalyzes the oxidation of either pyridoxine 5'-phosphate (PNP) or pyridoxamine 5'-phosphate (PMP) into pyridoxal 5'-phosphate (PLP). In Rhizobium etli (strain ATCC 51251 / DSM 11541 / JCM 21823 / NBRC 15573 / CFN 42), this protein is Pyridoxine/pyridoxamine 5'-phosphate oxidase.